Consider the following 429-residue polypeptide: Metacaspase-1A (429 aa).

The tract at residues 1-68 (MQHHHQGSYG…PQHNGGQMYG (68 aa)) is disordered. Gly residues predominate over residues 8–19 (SYGGGGGGGGYP). Residues 20-45 (GQAYREQNPYGYGQQSPQQGYGAPQQ) are compositionally biased toward low complexity. Residues 46-62 (HNGYNQPPSGYGQPQHN) are compositionally biased toward polar residues. Residues histidine 220 and cysteine 276 contribute to the active site.

Belongs to the peptidase C14B family.

In terms of biological role, involved in cell death (apoptosis). The polypeptide is Metacaspase-1A (casA) (Aspergillus clavatus (strain ATCC 1007 / CBS 513.65 / DSM 816 / NCTC 3887 / NRRL 1 / QM 1276 / 107)).